The sequence spans 142 residues: General odorant-binding protein 99a (142 aa).

The signal sequence occupies residues 1-16 (MKVFVAICVLIGLASA). Disulfide bonds link cysteine 33-cysteine 64, cysteine 60-cysteine 116, and cysteine 105-cysteine 125.

It belongs to the PBP/GOBP family. As to expression, expressed in larval chemosensory organ. Specifically expressed exclusively in a subset of chemosensory sensilla on the third antennal segment.

Its subcellular location is the secreted. Present in the aqueous fluid surrounding olfactory sensory dendrites and are thought to aid in the capture and transport of hydrophobic odorants into and through this fluid. The protein is General odorant-binding protein 99a (Obp99a) of Drosophila melanogaster (Fruit fly).